The following is a 490-amino-acid chain: MELSLESLGGLHGVTHAQAGELLSPGHARSAAAQHRSLVASGRPGLVAGMASLLDGGGAGGGGAGGAGAAGAAGGGPDFRGELAGPLHPAMGMACEAPGLGGTYTTLTPLQHLPPLAAVADKFHQHAVAGAHGGHPHAHPHPATAPPPPPPQRLAASVSGSFTLMRDERAALASVGHLYGPYGKELPTMGSPLSPLPSALPPALHSAPQPPPPPPLAAYGAPGHLAGDKLLPPAAFEPHAALLGRAEDALARGLPGGGGGAGGGGAAGGAAAGLLAPLGGLAAAGAHGPHSGGGGPGGGGGAGGGSGGPGAGAAAEEINTKEVAQRITAELKRYSIPQAIFAQRILCRSQGTLSDLLRNPKPWSKLKSGRETFRRMWKWLQEPEFQRMSALRLAACKRKEQDQQKERALQPKKQRLVFTDLQRRTLIAIFKENKRPSKEMQATISQQLGLELNTVSNFFMNARRRCMNRWAEEPGATPGTGTATATFSKA.

Disordered stretches follow at residues G130 to A155, L193 to P213, and H287 to E316. Positions A143 to Q152 are enriched in pro residues. Positions H290–A311 are enriched in gly residues. Positions P309 to A395 form a DNA-binding region, CUT. A DNA-binding region (homeobox) is located at residues P411 to W470.

The protein belongs to the CUT homeobox family. Specifically expressed in brain, stomach and gut. Within the gut, expressed only in duodenum and jejunum.

The protein resides in the nucleus. Its function is as follows. Transcriptional activator. Binds the consensus DNA sequence 5'-DHWATTGAYTWWD-3' on a variety of gene promoters such as those of HNF3B and TTR. This chain is One cut domain family member 3 (Onecut3), found in Mus musculus (Mouse).